A 60-amino-acid chain; its full sequence is uncharacterized protein (60 aa).

This is an uncharacterized protein from Bacillus subtilis (strain 168).